Consider the following 451-residue polypeptide: Ribosomal protein uS12 methylthiotransferase RimO (451 aa).

The MTTase N-terminal domain occupies 17 to 127; sequence PTIGFVSLGC…VLAQVHEHLP (111 aa). [4Fe-4S] cluster is bound by residues cysteine 26, cysteine 62, cysteine 91, cysteine 160, cysteine 164, and cysteine 167. A Radical SAM core domain is found at 146–383; the sequence is LTPRHYAYLK…MQLQQRISTE (238 aa). The TRAM domain occupies 386–451; sequence KQKVGQTLPV…DEYDLWGTRV (66 aa).

It belongs to the methylthiotransferase family. RimO subfamily. Requires [4Fe-4S] cluster as cofactor.

The protein localises to the cytoplasm. The enzyme catalyses L-aspartate(89)-[ribosomal protein uS12]-hydrogen + (sulfur carrier)-SH + AH2 + 2 S-adenosyl-L-methionine = 3-methylsulfanyl-L-aspartate(89)-[ribosomal protein uS12]-hydrogen + (sulfur carrier)-H + 5'-deoxyadenosine + L-methionine + A + S-adenosyl-L-homocysteine + 2 H(+). Functionally, catalyzes the methylthiolation of an aspartic acid residue of ribosomal protein uS12. The protein is Ribosomal protein uS12 methylthiotransferase RimO of Cellvibrio japonicus (strain Ueda107) (Pseudomonas fluorescens subsp. cellulosa).